The following is a 1193-amino-acid chain: Pyruvate carboxylase (1193 aa).

Residues 41 to 493 form the Biotin carboxylation domain; sequence QFQKILVANR…WTTFIDDTTE (453 aa). Residues Lys-159, Glu-243, and His-278 each contribute to the ATP site. One can recognise an ATP-grasp domain in the interval 163–360; that stretch reads RQLAIRCNVP…IVAAQIQIAA (198 aa). Arg-335 is a catalytic residue. Positions 579–847 constitute a Pyruvate carboxyltransferase domain; that stretch reads CLIMDTTWRD…DPGLNSAHVR (269 aa). Residues 587 to 591 and Arg-660 each bind substrate; that span reads RDAHQ. Asp-588 serves as a coordination point for a divalent metal cation. Residues Lys-756, His-786, and His-788 each contribute to the a divalent metal cation site. Lys-756 is subject to N6-carboxylysine. Substrate is bound at residue Thr-921. A Biotinyl-binding domain is found at 1116–1191; that stretch reads KADVGDSSQV…DGQDLVCKIT (76 aa). Lys-1157 is modified (N6-biotinyllysine).

Biotin serves as cofactor. It depends on Zn(2+) as a cofactor.

It is found in the cytoplasm. The enzyme catalyses hydrogencarbonate + pyruvate + ATP = oxaloacetate + ADP + phosphate + H(+). Its pathway is carbohydrate biosynthesis; gluconeogenesis. Functionally, pyruvate carboxylase catalyzes a 2-step reaction, involving the ATP-dependent carboxylation of the covalently attached biotin in the first step and the transfer of the carboxyl group to pyruvate in the second. This chain is Pyruvate carboxylase (pyc), found in Aspergillus terreus (strain NIH 2624 / FGSC A1156).